Consider the following 500-residue polypeptide: Putative beta-glucosidase 5 (500 aa).

The N-terminal stretch at 1–20 (MEQFFALFTIFLSFAFPGRC) is a signal peptide. A beta-D-glucoside-binding positions include Gln43, His140, and 185–186 (NE). Catalysis depends on Glu186, which acts as the Proton donor. Cys205 and Cys212 are oxidised to a cystine. Asn216 is a glycosylation site (N-linked (GlcNAc...) asparagine). Tyr328 contacts a beta-D-glucoside. The N-linked (GlcNAc...) asparagine glycan is linked to Asn361. Glu394 provides a ligand contact to a beta-D-glucoside. The Nucleophile role is filled by Glu394. Asn424 is a glycosylation site (N-linked (GlcNAc...) asparagine). 2 residues coordinate a beta-D-glucoside: Trp434 and Tyr450. 2 N-linked (GlcNAc...) asparagine glycosylation sites follow: Asn456 and Asn495.

This sequence belongs to the glycosyl hydrolase 1 family.

It catalyses the reaction Hydrolysis of terminal, non-reducing beta-D-glucosyl residues with release of beta-D-glucose.. This chain is Putative beta-glucosidase 5, found in Arabidopsis thaliana (Mouse-ear cress).